Reading from the N-terminus, the 183-residue chain is Adenine phosphoribosyltransferase (183 aa).

The protein belongs to the purine/pyrimidine phosphoribosyltransferase family. In terms of assembly, homodimer.

It localises to the cytoplasm. The catalysed reaction is AMP + diphosphate = 5-phospho-alpha-D-ribose 1-diphosphate + adenine. It participates in purine metabolism; AMP biosynthesis via salvage pathway; AMP from adenine: step 1/1. Its function is as follows. Catalyzes a salvage reaction resulting in the formation of AMP, that is energically less costly than de novo synthesis. The polypeptide is Adenine phosphoribosyltransferase (Salmonella paratyphi C (strain RKS4594)).